Consider the following 314-residue polypeptide: DNA-directed RNA polymerase subunit alpha (314 aa).

An alpha N-terminal domain (alpha-NTD) region spans residues 1 to 228 (MIEIEKPKIE…EHLNIFVGLT (228 aa)). Residues 245–314 (KEKVLEMTIE…ELGLGLRKDD (70 aa)) form an alpha C-terminal domain (alpha-CTD) region.

The protein belongs to the RNA polymerase alpha chain family. As to quaternary structure, homodimer. The RNAP catalytic core consists of 2 alpha, 1 beta, 1 beta' and 1 omega subunit. When a sigma factor is associated with the core the holoenzyme is formed, which can initiate transcription.

The enzyme catalyses RNA(n) + a ribonucleoside 5'-triphosphate = RNA(n+1) + diphosphate. Its function is as follows. DNA-dependent RNA polymerase catalyzes the transcription of DNA into RNA using the four ribonucleoside triphosphates as substrates. The protein is DNA-directed RNA polymerase subunit alpha of Bacillus thuringiensis (strain Al Hakam).